Here is a 75-residue protein sequence, read N- to C-terminus: Large ribosomal subunit protein uL29 (75 aa).

Belongs to the universal ribosomal protein uL29 family.

This chain is Large ribosomal subunit protein uL29, found in Pyrobaculum aerophilum (strain ATCC 51768 / DSM 7523 / JCM 9630 / CIP 104966 / NBRC 100827 / IM2).